Consider the following 124-residue polypeptide: MKFAVAIAFTLLVCVFAQEEEEPVTCGGKQCKPNSCCVQNSHGKGKDSPRCHPLGKLNNPCEVEPNENGIYSQHCPCGEGLSCTKVGEPNKLRCQEESGKSDKSKESQGSDESEESEESKESCG.

The signal sequence occupies residues 1 to 17; the sequence is MKFAVAIAFTLLVCVFA. Intrachain disulfides connect cysteine 26/cysteine 37, cysteine 31/cysteine 51, cysteine 36/cysteine 75, cysteine 61/cysteine 83, and cysteine 77/cysteine 94. Positions 93-108 are enriched in basic and acidic residues; the sequence is RCQEESGKSDKSKESQ. Positions 93–124 are disordered; it reads RCQEESGKSDKSKESQGSDESEESEESKESCG. The segment covering 109–118 has biased composition (acidic residues); that stretch reads GSDESEESEE.

Belongs to the neurotoxin 32 family. Expressed by the venom gland.

Its subcellular location is the secreted. The protein is U33-theraphotoxin-Cg1a of Chilobrachys guangxiensis (Chinese earth tiger tarantula).